Here is a 357-residue protein sequence, read N- to C-terminus: MGSLESEKTVTGYAARDSSGHLSPYTYNLRKKGPEDVIVKVIYCGICHSDLVQMRNEMGMSHYPMVPGHEVVGIVTEIGSEVKKFKVGEHVGVGCIVGSCRSCGNCNQSMEQYCSKRIWTYNDVNHDGTPTQGGFASSMVVDQMFVVRIPENLPLEQAAPLLCAGVTVFSPMKHFAMTEPGKKCGILGLGGVGHLGVKIAKAFGLHVTVISSSDKKKEEAMEVLGADAYLVSKDTEKMMEAAESLDYIMDTIPVAHPLEPYLALLKTNGKLVMLGVVPEPLHFVTPPLILGRRSIAGSFIGGMEETQETLDFCAEKKVSSMIEVVGLDYINTAMERLEKNDVRYRFVVDVAGSELDN.

Zn(2+) is bound at residue C47. Residue S49 coordinates NADP(+). The Zn(2+) site is built by H69, E70, C100, C103, C106, C114, and C163. NADP(+) contacts are provided by residues T167, G188–G193, S211–K216, T251, G275, and S298–I300.

This sequence belongs to the zinc-containing alcohol dehydrogenase family. In terms of assembly, homodimer. The cofactor is Zn(2+).

It carries out the reaction (E)-cinnamyl alcohol + NADP(+) = (E)-cinnamaldehyde + NADPH + H(+). The enzyme catalyses (E)-coniferol + NADP(+) = (E)-coniferaldehyde + NADPH + H(+). The catalysed reaction is (E)-sinapyl alcohol + NADP(+) = (E)-sinapaldehyde + NADPH + H(+). It catalyses the reaction (E)-4-coumaroyl alcohol + NADP(+) = (E)-4-coumaraldehyde + NADPH + H(+). It carries out the reaction (E)-caffeyl alcohol + NADP(+) = (E)-caffeyl aldehyde + NADPH + H(+). The protein operates within aromatic compound metabolism; phenylpropanoid biosynthesis. Functionally, involved in lignin biosynthesis. Catalyzes the final step specific for the production of lignin monomers. Catalyzes the NADPH-dependent reduction of coniferaldehyde, 5-hydroxyconiferaldehyde, sinapaldehyde, 4-coumaraldehyde and caffeyl aldehyde to their respective alcohols. The chain is Probable cinnamyl alcohol dehydrogenase from Pinus taeda (Loblolly pine).